The following is a 510-amino-acid chain: Leucine-rich repeat-containing protein 53 (510 aa).

7 LRR repeats span residues 34–55 (TTRV…NLSL), 58–79 (NLAL…ALDG), 82–102 (MLRT…TDHT), 108–129 (SLQV…WFRN), 132–153 (GLTR…SFGG), 158–179 (SLRH…AFRP), and 182–203 (QLQE…FTPL). Positions 214–271 (NQWSCTCDLHPLARFLRNYIKSSAHTLRNAKDLNCQPSTAAVAAAQSVLRLSETNCDP) constitute an LRRCT domain. A helical transmembrane segment spans residues 294–314 (LLTVLGFAGAVGLTCLGLVVF).

It localises to the membrane. In Macaca fascicularis (Crab-eating macaque), this protein is Leucine-rich repeat-containing protein 53 (LRRC53).